A 456-amino-acid chain; its full sequence is uncharacterized protein (456 aa).

2 stretches are compositionally biased toward basic and acidic residues: residues 181 to 210 (DQRK…DKKV) and 217 to 231 (KEIE…ENEE). Residues 181 to 231 (DQRKESIVNDERKKNPEFREKPDKNEDKKVKPPPSLKEIENKGIDHEENEE) form a disordered region. Positions 216–248 (LKEIENKGIDHEENEEDKKRELMFKLQLLQKQY) form a coiled coil. A helical membrane pass occupies residues 347–365 (LALAILFNAVWFIAAKMIM). The span at 383-407 (NKSGTTPNSVSPRTWGNSKSPQSEF) shows a compositional bias: polar residues. The tract at residues 383-456 (NKSGTTPNSV…MREQGIETLK (74 aa)) is disordered. The span at 441 to 456 (DESRREMREQGIETLK) shows a compositional bias: basic and acidic residues.

This sequence belongs to the IIV-6 067R family.

It localises to the membrane. This is an uncharacterized protein from Invertebrate iridescent virus 6 (IIV-6).